We begin with the raw amino-acid sequence, 170 residues long: ATP synthase subunit b (170 aa).

A helical membrane pass occupies residues 5–25; the sequence is YFIPCLLLPTMMLASGGGGET.

It belongs to the ATPase B chain family. In terms of assembly, F-type ATPases have 2 components, F(1) - the catalytic core - and F(0) - the membrane proton channel. F(1) has five subunits: alpha(3), beta(3), gamma(1), delta(1), epsilon(1). F(0) has three main subunits: a(1), b(2) and c(10-14). The alpha and beta chains form an alternating ring which encloses part of the gamma chain. F(1) is attached to F(0) by a central stalk formed by the gamma and epsilon chains, while a peripheral stalk is formed by the delta and b chains.

It is found in the cell inner membrane. F(1)F(0) ATP synthase produces ATP from ADP in the presence of a proton or sodium gradient. F-type ATPases consist of two structural domains, F(1) containing the extramembraneous catalytic core and F(0) containing the membrane proton channel, linked together by a central stalk and a peripheral stalk. During catalysis, ATP synthesis in the catalytic domain of F(1) is coupled via a rotary mechanism of the central stalk subunits to proton translocation. Its function is as follows. Component of the F(0) channel, it forms part of the peripheral stalk, linking F(1) to F(0). This Wolinella succinogenes (strain ATCC 29543 / DSM 1740 / CCUG 13145 / JCM 31913 / LMG 7466 / NCTC 11488 / FDC 602W) (Vibrio succinogenes) protein is ATP synthase subunit b.